We begin with the raw amino-acid sequence, 353 residues long: UDP-N-acetylglucosamine--N-acetylmuramyl-(pentapeptide) pyrophosphoryl-undecaprenol N-acetylglucosamine transferase (353 aa).

Residues Thr-10–Gly-12, Asn-124, Ser-183, and Gln-283 each bind UDP-N-acetyl-alpha-D-glucosamine.

This sequence belongs to the glycosyltransferase 28 family. MurG subfamily.

It is found in the cell inner membrane. It carries out the reaction di-trans,octa-cis-undecaprenyl diphospho-N-acetyl-alpha-D-muramoyl-L-alanyl-D-glutamyl-meso-2,6-diaminopimeloyl-D-alanyl-D-alanine + UDP-N-acetyl-alpha-D-glucosamine = di-trans,octa-cis-undecaprenyl diphospho-[N-acetyl-alpha-D-glucosaminyl-(1-&gt;4)]-N-acetyl-alpha-D-muramoyl-L-alanyl-D-glutamyl-meso-2,6-diaminopimeloyl-D-alanyl-D-alanine + UDP + H(+). It participates in cell wall biogenesis; peptidoglycan biosynthesis. Functionally, cell wall formation. Catalyzes the transfer of a GlcNAc subunit on undecaprenyl-pyrophosphoryl-MurNAc-pentapeptide (lipid intermediate I) to form undecaprenyl-pyrophosphoryl-MurNAc-(pentapeptide)GlcNAc (lipid intermediate II). This chain is UDP-N-acetylglucosamine--N-acetylmuramyl-(pentapeptide) pyrophosphoryl-undecaprenol N-acetylglucosamine transferase, found in Helicobacter pylori (strain HPAG1).